Here is a 221-residue protein sequence, read N- to C-terminus: ATP phosphoribosyltransferase (221 aa).

It belongs to the ATP phosphoribosyltransferase family. Short subfamily. In terms of assembly, heteromultimer composed of HisG and HisZ subunits.

Its subcellular location is the cytoplasm. The enzyme catalyses 1-(5-phospho-beta-D-ribosyl)-ATP + diphosphate = 5-phospho-alpha-D-ribose 1-diphosphate + ATP. Its pathway is amino-acid biosynthesis; L-histidine biosynthesis; L-histidine from 5-phospho-alpha-D-ribose 1-diphosphate: step 1/9. Functionally, catalyzes the condensation of ATP and 5-phosphoribose 1-diphosphate to form N'-(5'-phosphoribosyl)-ATP (PR-ATP). Has a crucial role in the pathway because the rate of histidine biosynthesis seems to be controlled primarily by regulation of HisG enzymatic activity. The chain is ATP phosphoribosyltransferase from Anaeromyxobacter dehalogenans (strain 2CP-1 / ATCC BAA-258).